A 475-amino-acid chain; its full sequence is Ankyrin repeat, SAM and basic leucine zipper domain-containing protein 1 (475 aa).

Residues 1–24 (MAAGTVRGLAVAGGGESSESEDDG) are disordered. Serine 17, serine 18, and serine 20 each carry phosphoserine. ANK repeat units lie at residues 45–74 (EKNE…SVDS), 78–107 (YGWT…NASF), 110–144 (DKQT…DPNV), 148–177 (RLMT…EVNA), 181–210 (NGYT…NKML), and 214–243 (DGKT…PLEG). Positions 272–334 (SYTAFGDLEI…KILAALKELE (63 aa)) constitute an SAM domain.

In terms of assembly, interacts with DDX4, PIWIL1, RANBP9 and TDRD1.

The protein resides in the cytoplasm. Functionally, plays a central role during spermatogenesis by repressing transposable elements and preventing their mobilization, which is essential for the germline integrity. Acts via the piRNA metabolic process, which mediates the repression of transposable elements during meiosis by forming complexes composed of piRNAs and Piwi proteins and governs the methylation and subsequent repression of transposons. Its association with pi-bodies suggests a participation in the primary piRNAs metabolic process. Required prior to the pachytene stage to facilitate the production of multiple types of piRNAs, including those associated with repeats involved in the regulation of retrotransposons. May act by mediating protein-protein interactions during germ cell maturation. The protein is Ankyrin repeat, SAM and basic leucine zipper domain-containing protein 1 (ASZ1) of Neofelis nebulosa (Clouded leopard).